A 129-amino-acid polypeptide reads, in one-letter code: Large ribosomal subunit protein bL12 (129 aa).

Belongs to the bacterial ribosomal protein bL12 family. In terms of assembly, homodimer. Part of the ribosomal stalk of the 50S ribosomal subunit. Forms a multimeric L10(L12)X complex, where L10 forms an elongated spine to which 2 to 4 L12 dimers bind in a sequential fashion. Binds GTP-bound translation factors.

Forms part of the ribosomal stalk which helps the ribosome interact with GTP-bound translation factors. Is thus essential for accurate translation. This chain is Large ribosomal subunit protein bL12, found in Mycobacteroides abscessus (strain ATCC 19977 / DSM 44196 / CCUG 20993 / CIP 104536 / JCM 13569 / NCTC 13031 / TMC 1543 / L948) (Mycobacterium abscessus).